The primary structure comprises 148 residues: Large ribosomal subunit protein uL15 (148 aa).

A compositionally biased stretch (basic residues) spans 1-30 (MPSRLRKTRKLRGHVSHGHGRIGKHRKHPG). The tract at residues 1–37 (MPSRLRKTRKLRGHVSHGHGRIGKHRKHPGGRGNAGG) is disordered. Position 39 is a (3S)-3-hydroxyhistidine (H39). An N6-acetyllysine mark is found at K47 and K55. Residue S68 is modified to Phosphoserine. Position 110 is an N6-acetyllysine (K110).

It belongs to the universal ribosomal protein uL15 family. Component of the large ribosomal subunit. In terms of processing, hydroxylated on His-39 by MINA.

The protein localises to the cytoplasm. Functionally, component of the large ribosomal subunit. The ribosome is a large ribonucleoprotein complex responsible for the synthesis of proteins in the cell. This is Large ribosomal subunit protein uL15 (Rpl27a) from Mus musculus (Mouse).